The chain runs to 791 residues: MGDQRLQDWLRSPGMDSKPWYCNKRPSKCFAKCKHRRLRFPPMDTQNWVFVKEGMDDFRYGCPSPEDTLVCRRDEFLLPKISLRGPQADPKSGQKKLLKKAALFSKLSPAQLARKAFVEQVEAQLMAKHPLAMYPNLGEDMPPDLLLQVLKHLDPERELEDAWACCETQEKTTEVPTEPGKHPCGEFCLKPPETPVSHLLPEPPETGVSHLSPEPPKTPVSSLRPEPPETGVSHLRPEPPETGVSHIRPGPPITRRRSSLLRQLLKLDSERKLEDARAPCEGREKTTDEPTEPGKYPCGKFCPRPFETPLSHLRQEPPKTPVSSLRPEPPETGESHLRLEHSKTRRGSSLRSEPSETGVSRLRLAPPKTRRGSSLHAEPSKTGVSHLSPEPPKTEVSHLHPVPPKTGVCHLRLEPPDTSQVSNLLLYILKVLDSGRTLKDVWDRCEARVKKTKEPTEPHKSPCGEPCLQPPETQVSHPHPEHPKTRRRSSLHSQPPKTRRTSSLRSEPPKTRRTSSLRSEPPKTRRTSSLGPEPPKTRRVSSLRPELPKSRRVSSLHPEPPKAPESHQFSEPPKIRASYIKELLQEDTPSTKECVSDSLQYRYTSEKLREFFKWAGDLGADEESIRNLFDFTPKYRATHEDQKFKKVKECSSELKYSMELDEKDEDKFFSQEKYWGRKFHTPSNSYTAQRVKMKYGAWYLKPKLWKKLRSDEPLIDPKLLLKKPDEPDVLDDLYGPIAFKDFILSKGYEMPGIIQRLFARRGWTYDSVKTPIQRAMIFYKYKEIVEASEED.

Disordered stretches follow at residues 195 to 257 (PVSH…TRRR), 274 to 409 (EDAR…TGVC), and 449 to 573 (VKKT…SEPP). Basic and acidic residues-rich tracts occupy residues 274–288 (EDAR…KTTD) and 333–342 (GESHLRLEHS). The span at 349–358 (SLRSEPSETG) shows a compositional bias: polar residues. Residues 449-462 (VKKTKEPTEPHKSP) are compositionally biased toward basic and acidic residues.

This sequence belongs to the FAM47 family.

This Homo sapiens (Human) protein is Protein FAM47A (FAM47A).